We begin with the raw amino-acid sequence, 334 residues long: MTPAVFLVILCFGVASGAPARDPNLDAEWQDWKTKYAKSYSPVEEELKRAVWEENLKMIQLHNKENGLGKNGFTMEMNAFADTTGEEFRKSLSDILIPAAVTNPSAQKQVSIGLPNFKDWRKEGYVTPVRNQGKCGSCWAFAAVGAIEGQMFSKTGNLTPLSVQNLLDCSKSEGNNGCRWGTAHQAFNYVLKNKGLEAEATYPYEGKDGPCRYHSENASANITGFVNLPPNELYLWVAVASIGPVSAAIDASHDSFRFYSGGVYHEPNCSSYVVNHAVLVVGYGFEGNETDGNNYWLIKNSWGEEWGINGFMKIAKDRNNHCGIASQASFPDIF.

An N-terminal signal peptide occupies residues 1–17 (MTPAVFLVILCFGVASG). The propeptide at 18–113 (APARDPNLDA…PSAQKQVSIG (96 aa)) is activation peptide. The active site involves C138. N-linked (GlcNAc...) asparagine glycans are attached at residues N217, N221, and N268. C269 and C322 are joined by a disulfide. H276 is a catalytic residue. N-linked (GlcNAc...) asparagine glycosylation is present at N288. N300 is an active-site residue.

The protein belongs to the peptidase C1 family. In terms of tissue distribution, expressed specifically in placenta.

It localises to the lysosome. The protein is Cathepsin J (Ctsj) of Rattus norvegicus (Rat).